The following is a 433-amino-acid chain: Bifunctional protein GlmU (433 aa).

Positions 1-226 (MLSVIILAAG…EECFLGVNSQ (226 aa)) are pyrophosphorylase. Residues 7-10 (LAAG), Lys21, and 80-81 (GT) each bind UDP-N-acetyl-alpha-D-glucosamine. Mg(2+) is bound at residue Asp106. The UDP-N-acetyl-alpha-D-glucosamine site is built by Gly138, Glu152, Asn167, and Asn224. Position 224 (Asn224) interacts with Mg(2+). The tract at residues 227-247 (TERAKAEEIMLERLRKNAMDL) is linker. An N-acetyltransferase region spans residues 248–433 (GVVMQLPSSI…NGYFKFFKKP (186 aa)). The UDP-N-acetyl-alpha-D-glucosamine site is built by Arg311 and Lys328. His339 functions as the Proton acceptor in the catalytic mechanism. UDP-N-acetyl-alpha-D-glucosamine-binding residues include Tyr342 and Asn353. Residues Ala356, 362 to 363 (NY), Ser381, Ser399, and Arg416 each bind acetyl-CoA.

This sequence in the N-terminal section; belongs to the N-acetylglucosamine-1-phosphate uridyltransferase family. In the C-terminal section; belongs to the transferase hexapeptide repeat family. As to quaternary structure, homotrimer. Mg(2+) serves as cofactor.

It localises to the cytoplasm. The catalysed reaction is alpha-D-glucosamine 1-phosphate + acetyl-CoA = N-acetyl-alpha-D-glucosamine 1-phosphate + CoA + H(+). It carries out the reaction N-acetyl-alpha-D-glucosamine 1-phosphate + UTP + H(+) = UDP-N-acetyl-alpha-D-glucosamine + diphosphate. The protein operates within nucleotide-sugar biosynthesis; UDP-N-acetyl-alpha-D-glucosamine biosynthesis; N-acetyl-alpha-D-glucosamine 1-phosphate from alpha-D-glucosamine 6-phosphate (route II): step 2/2. Its pathway is nucleotide-sugar biosynthesis; UDP-N-acetyl-alpha-D-glucosamine biosynthesis; UDP-N-acetyl-alpha-D-glucosamine from N-acetyl-alpha-D-glucosamine 1-phosphate: step 1/1. It functions in the pathway bacterial outer membrane biogenesis; LPS lipid A biosynthesis. Functionally, catalyzes the last two sequential reactions in the de novo biosynthetic pathway for UDP-N-acetylglucosamine (UDP-GlcNAc). The C-terminal domain catalyzes the transfer of acetyl group from acetyl coenzyme A to glucosamine-1-phosphate (GlcN-1-P) to produce N-acetylglucosamine-1-phosphate (GlcNAc-1-P), which is converted into UDP-GlcNAc by the transfer of uridine 5-monophosphate (from uridine 5-triphosphate), a reaction catalyzed by the N-terminal domain. The sequence is that of Bifunctional protein GlmU from Helicobacter pylori (strain HPAG1).